The following is a 174-amino-acid chain: NADH-ubiquinone oxidoreductase chain 6 (174 aa).

5 consecutive transmembrane segments (helical) span residues 4–24 (LIIM…KHPL), 25–45 (SMGL…GIYV), 48–68 (FWFS…LFIY), 82–102 (FNLT…FFII), and 143–163 (LITL…VKIT).

Belongs to the complex I subunit 6 family.

The protein localises to the mitochondrion membrane. The enzyme catalyses a ubiquinone + NADH + 5 H(+)(in) = a ubiquinol + NAD(+) + 4 H(+)(out). Functionally, core subunit of the mitochondrial membrane respiratory chain NADH dehydrogenase (Complex I) that is believed to belong to the minimal assembly required for catalysis. Complex I functions in the transfer of electrons from NADH to the respiratory chain. The immediate electron acceptor for the enzyme is believed to be ubiquinone. The sequence is that of NADH-ubiquinone oxidoreductase chain 6 (ND6) from Anopheles quadrimaculatus (Common malaria mosquito).